A 90-amino-acid polypeptide reads, in one-letter code: Molybdopterin synthase sulfur carrier subunit (90 aa).

Position 90 is a 1-thioglycine; alternate (G90). G90 is subject to Glycyl adenylate; alternate.

Belongs to the MoaD family. MOCS2A subfamily. In terms of assembly, heterotetramer; composed of 2 small (Mocs2A) and 2 large (Mocs2B) subunits. C-terminal thiocarboxylation occurs in 2 steps, it is first acyl-adenylated (-COAMP) via the hesA/moeB/thiF part of MOCS3, then thiocarboxylated (-COSH) via the rhodanese domain of MOCS3.

Its subcellular location is the cytoplasm. Its pathway is cofactor biosynthesis; molybdopterin biosynthesis. In terms of biological role, acts as a sulfur carrier required for molybdopterin biosynthesis. Component of the molybdopterin synthase complex that catalyzes the conversion of precursor Z into molybdopterin by mediating the incorporation of 2 sulfur atoms into precursor Z to generate a dithiolene group. In the complex, serves as sulfur donor by being thiocarboxylated (-COSH) at its C-terminus by MOCS3. After interaction with Mocs2B, the sulfur is then transferred to precursor Z to form molybdopterin. The chain is Molybdopterin synthase sulfur carrier subunit from Drosophila erecta (Fruit fly).